The following is a 189-amino-acid chain: Ribosome maturation factor RimM (189 aa).

In terms of domain architecture, PRC barrel spans 96 to 169 (EDEFFQTDLI…TLLVEPYAAG (74 aa)). The disordered stretch occupies residues 170 to 189 (LIADDEDERPQNEKKKPKKS).

It belongs to the RimM family. Binds ribosomal protein uS19.

The protein localises to the cytoplasm. An accessory protein needed during the final step in the assembly of 30S ribosomal subunit, possibly for assembly of the head region. Essential for efficient processing of 16S rRNA. May be needed both before and after RbfA during the maturation of 16S rRNA. It has affinity for free ribosomal 30S subunits but not for 70S ribosomes. This Brucella anthropi (strain ATCC 49188 / DSM 6882 / CCUG 24695 / JCM 21032 / LMG 3331 / NBRC 15819 / NCTC 12168 / Alc 37) (Ochrobactrum anthropi) protein is Ribosome maturation factor RimM.